We begin with the raw amino-acid sequence, 196 residues long: Late protein I196L (196 aa).

Repeat copies occupy residues 28–48 and 49–70. The stretch at 71 to 92 is one 3; approximate repeat; sequence SNYLTSAISTNISDKEEDTPFS.

Belongs to the asfivirus I196L family.

This chain is Late protein I196L, found in African swine fever virus (isolate Warthog/Namibia/Wart80/1980) (ASFV).